Here is a 172-residue protein sequence, read N- to C-terminus: Small ribosomal subunit protein uS5c (172 aa).

The region spanning 15–78 (WEEKVVQVKR…TDAKKHIINV (64 aa)) is the S5 DRBM domain.

Belongs to the universal ribosomal protein uS5 family. In terms of assembly, part of the 30S ribosomal subunit. Contacts protein S4.

It localises to the plastid. It is found in the chloroplast. With S4 and S12 plays an important role in translational accuracy. This Gracilaria tenuistipitata var. liui (Red alga) protein is Small ribosomal subunit protein uS5c (rps5).